The following is a 284-amino-acid chain: NADH-cytochrome b5 reductase 1 (284 aa).

The helical transmembrane segment at 7-27 threads the bilayer; it reads KLVVVIVIVVVPLLFKFIIGP. One can recognise an FAD-binding FR-type domain in the interval 38–142; the sequence is NDFQSFPLVE…KGPRGNYHYE (105 aa). Residues 122 to 137 and 148 to 180 contribute to the FAD site; these read GELK…GPRG and HLGM…KVSL.

It belongs to the flavoprotein pyridine nucleotide cytochrome reductase family. As to quaternary structure, monomer. Component of the 2-(3-amino-3-carboxypropyl)histidine synthase complex composed of DPH1, DPH2, KTI11/DPH3 and a NADH-dependent reductase, predominantly CBR1. Interacts with KTI11/DPH3. Interacts with STE20. FAD is required as a cofactor.

Its subcellular location is the mitochondrion outer membrane. The catalysed reaction is 2 Fe(III)-[cytochrome b5] + NADH = 2 Fe(II)-[cytochrome b5] + NAD(+) + H(+). It carries out the reaction 2 Fe(3+)-[Dph3] + NADH = 2 Fe(2+)-[Dph3] + NAD(+) + H(+). It participates in protein modification; peptidyl-diphthamide biosynthesis. With respect to regulation, competitively inhibited by NAD(+). Inhibited by mercurials such as p-chloromercuribenzoate (PCMB) and HgCl(2). Enzymatic activity increases under anaerobic conditions. Its function is as follows. NADH-dependent reductase for KTI11/DPH3 and cytochrome b5. Required for the first step of diphthamide biosynthesis, a post-translational modification of histidine which occurs in elongation factor 2. DPH1 and DPH2 transfer a 3-amino-3-carboxypropyl (ACP) group from S-adenosyl-L-methionine (SAM) to a histidine residue, the reaction is assisted by a reduction system comprising KTI11/DPH3 and a NADH-dependent reductase, predominantly CBR1. By reducing KTI11/DPH3, also involved in the formation of the tRNA wobble base modification mcm5s 2U (5-methoxycarbonylmethyl-2-thiouridine), mediated by the elongator complex. The cytochrome b5/NADH cytochrome b5 reductase electron transfer system supports the catalytic activity of several sterol biosynthetic enzymes. Plays a role in bud morphology. This Saccharomyces cerevisiae (strain ATCC 204508 / S288c) (Baker's yeast) protein is NADH-cytochrome b5 reductase 1 (CBR1).